Consider the following 513-residue polypeptide: GMP synthase [glutamine-hydrolyzing] (513 aa).

The Glutamine amidotransferase type-1 domain occupies 8 to 198; it reads KIIVLDYGSQ…ALNICGAKGN (191 aa). Cys-85 functions as the Nucleophile in the catalytic mechanism. Active-site residues include His-172 and Glu-174. The GMPS ATP-PPase domain maps to 199 to 388; it reads WSMENFIDMQ…LGMPDEIVWR (190 aa). 226–232 serves as a coordination point for ATP; it reads SGGVDSS.

As to quaternary structure, homodimer.

The enzyme catalyses XMP + L-glutamine + ATP + H2O = GMP + L-glutamate + AMP + diphosphate + 2 H(+). It functions in the pathway purine metabolism; GMP biosynthesis; GMP from XMP (L-Gln route): step 1/1. In terms of biological role, catalyzes the synthesis of GMP from XMP. This chain is GMP synthase [glutamine-hydrolyzing] (guaA), found in Lactococcus lactis subsp. lactis (strain IL1403) (Streptococcus lactis).